A 440-amino-acid chain; its full sequence is MDKRSIMKYERSQKLFEASQEVIPGGVNSPVRAFSSVGMNPPFIKRGKGAYIYDEDGNKYIDYVGSWGPLILGHCHPEVVENLKAVLETGTSFGAPTEIELKIAELITGAIPSVEMIRMVNSGTEATMTALRLARGYTGRNKIVKFNGNYHGHSDGLLIKAGSGALTHGVPNSPGVTPDVAKNTITAKYNDIEGIMEIFKQQGEEIAAVIIEPIAGNMGVVPMTNKFAHALRKITEDYGALLIFDEVMTGFRVSFGGAQSLYQIKPDLTCFGKIIGGGLPVGAFGGKREIMEHLSPVGPVYQAGTLSGNPLAMTAGYTTLSILHNNSGIYEELEKKAQKLEKGFKKIVKELQIDASFNRVGSMLCMFFTKEKVSDLETASTSNTEIYSQYFRAMLSRGVYLAPTQFETMFISDAHGDVEINRTIEAAYEGLKEIRNNPSI.

Lys273 carries the post-translational modification N6-(pyridoxal phosphate)lysine.

It belongs to the class-III pyridoxal-phosphate-dependent aminotransferase family. HemL subfamily. Homodimer. The cofactor is pyridoxal 5'-phosphate.

The protein localises to the cytoplasm. The catalysed reaction is (S)-4-amino-5-oxopentanoate = 5-aminolevulinate. It functions in the pathway porphyrin-containing compound metabolism; protoporphyrin-IX biosynthesis; 5-aminolevulinate from L-glutamyl-tRNA(Glu): step 2/2. The chain is Glutamate-1-semialdehyde 2,1-aminomutase from Alkaliphilus metalliredigens (strain QYMF).